Consider the following 116-residue polypeptide: Large ribosomal subunit protein bL17 (116 aa).

This sequence belongs to the bacterial ribosomal protein bL17 family. In terms of assembly, part of the 50S ribosomal subunit. Contacts protein L32.

The protein is Large ribosomal subunit protein bL17 of Gloeobacter violaceus (strain ATCC 29082 / PCC 7421).